We begin with the raw amino-acid sequence, 513 residues long: Histidine ammonia-lyase (513 aa).

Residues 142-144 (ASG) constitute a cross-link (5-imidazolinone (Ala-Gly)). At S143 the chain carries 2,3-didehydroalanine (Ser).

This sequence belongs to the PAL/histidase family. Post-translationally, contains an active site 4-methylidene-imidazol-5-one (MIO), which is formed autocatalytically by cyclization and dehydration of residues Ala-Ser-Gly.

The protein resides in the cytoplasm. It catalyses the reaction L-histidine = trans-urocanate + NH4(+). The protein operates within amino-acid degradation; L-histidine degradation into L-glutamate; N-formimidoyl-L-glutamate from L-histidine: step 1/3. The sequence is that of Histidine ammonia-lyase from Mesorhizobium japonicum (strain LMG 29417 / CECT 9101 / MAFF 303099) (Mesorhizobium loti (strain MAFF 303099)).